A 142-amino-acid polypeptide reads, in one-letter code: Rhinocerosin (142 aa).

Positions 1–16 are cleaved as a signal peptide; the sequence is MMKLYIVFGFIAFSAA. A propeptide spanning residues 17–70 is cleaved from the precursor; that stretch reads YVVPEGYYEPEYYPADGYESERVARASPAELIFDEDLADEPEVEEPQYYIRTRR. The interval 72-96 is disordered; it reads LQPGAPNFPMPGSQLPTSITSNIEK. Polar residues predominate over residues 85–96; the sequence is QLPTSITSNIEK.

Belongs to the coleoptericin family. In terms of tissue distribution, strongly expressed in the fat body and the Malpighian tubules, and weakly expressed in hemocytes and midgut.

The protein localises to the secreted. Its function is as follows. Has strong antibacterial activity against E.coli, Streptococcus pyogenes, Staphylococcus aureus but not against Pseudomonas aeruginosa. The protein is Rhinocerosin of Oryctes rhinoceros (Coconut rhinoceros beetle).